Reading from the N-terminus, the 212-residue chain is Imidazole glycerol phosphate synthase subunit HisH (212 aa).

The Glutamine amidotransferase type-1 domain maps to 3 to 212 (SIAVVDYGMG…LLSNFLKWTP (210 aa)). Cys-82 functions as the Nucleophile in the catalytic mechanism. Residues His-192 and Glu-194 contribute to the active site.

Heterodimer of HisH and HisF.

Its subcellular location is the cytoplasm. The catalysed reaction is 5-[(5-phospho-1-deoxy-D-ribulos-1-ylimino)methylamino]-1-(5-phospho-beta-D-ribosyl)imidazole-4-carboxamide + L-glutamine = D-erythro-1-(imidazol-4-yl)glycerol 3-phosphate + 5-amino-1-(5-phospho-beta-D-ribosyl)imidazole-4-carboxamide + L-glutamate + H(+). It catalyses the reaction L-glutamine + H2O = L-glutamate + NH4(+). The protein operates within amino-acid biosynthesis; L-histidine biosynthesis; L-histidine from 5-phospho-alpha-D-ribose 1-diphosphate: step 5/9. IGPS catalyzes the conversion of PRFAR and glutamine to IGP, AICAR and glutamate. The HisH subunit catalyzes the hydrolysis of glutamine to glutamate and ammonia as part of the synthesis of IGP and AICAR. The resulting ammonia molecule is channeled to the active site of HisF. In Nitrosomonas europaea (strain ATCC 19718 / CIP 103999 / KCTC 2705 / NBRC 14298), this protein is Imidazole glycerol phosphate synthase subunit HisH.